The chain runs to 341 residues: tRNA N6-adenosine threonylcarbamoyltransferase (341 aa).

Fe cation-binding residues include histidine 115 and histidine 119. Substrate-binding positions include 138 to 142 (VVSGG), aspartate 171, glycine 184, aspartate 188, and asparagine 279. Aspartate 307 is a Fe cation binding site.

The protein belongs to the KAE1 / TsaD family. Requires Fe(2+) as cofactor.

The protein resides in the cytoplasm. The catalysed reaction is L-threonylcarbamoyladenylate + adenosine(37) in tRNA = N(6)-L-threonylcarbamoyladenosine(37) in tRNA + AMP + H(+). Its function is as follows. Required for the formation of a threonylcarbamoyl group on adenosine at position 37 (t(6)A37) in tRNAs that read codons beginning with adenine. Is involved in the transfer of the threonylcarbamoyl moiety of threonylcarbamoyl-AMP (TC-AMP) to the N6 group of A37, together with TsaE and TsaB. TsaD likely plays a direct catalytic role in this reaction. The chain is tRNA N6-adenosine threonylcarbamoyltransferase from Clostridium kluyveri (strain NBRC 12016).